The sequence spans 187 residues: Pyridoxal 5'-phosphate synthase subunit PdxT (187 aa).

47–49 (GES) contacts L-glutamine. The active-site Nucleophile is C76. Residues R102 and 128–129 (IR) each bind L-glutamine. Catalysis depends on charge relay system residues H165 and E167.

This sequence belongs to the glutaminase PdxT/SNO family. In terms of assembly, in the presence of PdxS, forms a dodecamer of heterodimers. Only shows activity in the heterodimer.

It carries out the reaction aldehydo-D-ribose 5-phosphate + D-glyceraldehyde 3-phosphate + L-glutamine = pyridoxal 5'-phosphate + L-glutamate + phosphate + 3 H2O + H(+). The enzyme catalyses L-glutamine + H2O = L-glutamate + NH4(+). It participates in cofactor biosynthesis; pyridoxal 5'-phosphate biosynthesis. Catalyzes the hydrolysis of glutamine to glutamate and ammonia as part of the biosynthesis of pyridoxal 5'-phosphate. The resulting ammonia molecule is channeled to the active site of PdxS. This is Pyridoxal 5'-phosphate synthase subunit PdxT from Methanococcus maripaludis (strain C5 / ATCC BAA-1333).